A 469-amino-acid polypeptide reads, in one-letter code: Zinc transporter SLC39A7 (469 aa).

A helical transmembrane segment spans residues 10-30; that stretch reads WVAVGLLTWATLGLLVAELGG. Basic and acidic residues-rich tracts occupy residues 42-56 and 66-114; these read FHGH…DFHH and HTHE…EHSR. A disordered region spans residues 42–121; sequence FHGHSHRHSH…HSRGGYGESG (80 aa). Residue His66 is modified to Pros-methylhistidine. 3 helical membrane passes run 138-158, 169-189, and 214-234; these read ALGA…LIPV, LQIL…LHLI, and GPIL…LVVE. The span at 242–263 shows a compositional bias: basic residues; it reads GGHGHSHGHGHAHSHTHGSHGH. The segment at 242-310 is disordered; sequence GGHGHSHGHG…VRPQNAEEEK (69 aa). Positions 264 to 285 are enriched in basic and acidic residues; the sequence is GRQECSTKEKQSSEEEEKETRG. 2 positions are modified to phosphoserine: Ser275 and Ser276. 3 helical membrane passes run 386 to 406, 410 to 430, and 448 to 468; these read LTAV…GGAV, IAGG…FIYV, and SLLE…IAHL.

This sequence belongs to the ZIP transporter (TC 2.A.5) family. KE4/Catsup subfamily. In terms of assembly, homodimer. In terms of processing, methylation at some His residue by METTL9 leads to reduced zinc-binding. Rapidly phosphorylated by CK2 following Zn(2+) treatment. This phosphorylation is required for efficient cytosolic Zn(2+) release.

The protein resides in the endoplasmic reticulum membrane. It is found in the golgi apparatus. It localises to the cis-Golgi network membrane. The catalysed reaction is Zn(2+)(in) = Zn(2+)(out). Transports Zn(2+) from the endoplasmic reticulum (ER)/Golgi apparatus to the cytosol, playing an essential role in the regulation of cytosolic zinc levels. Acts as a gatekeeper of zinc release from intracellular stores, requiring post-translational activation by phosphorylation, resulting in activation of multiple downstream pathways leading to cell growth and proliferation. Has an essential role in B cell development and is required for proper B cell receptor signaling. Plays an important role in maintaining intestinal epithelial homeostasis and skin dermis development by regulating ER function. Controls cell signaling pathways involved in glucose metabolism in skeletal muscle. Has a protective role against ER stress in different biological contexts. Mediates Zn(2+)-induced ferroptosis. The protein is Zinc transporter SLC39A7 of Pongo abelii (Sumatran orangutan).